The following is a 374-amino-acid chain: MAHEILIAETEAFLKNVAPETRTAIISAITGGKSACKSAAKLIKNEHLPLMSGEATTMHIVMRCLYPEIKPWKKASDMLNKATSSLKKSEGRDIRKQMKAAGDFLGVESMMKMRAFRDDQIMEMVEEVYDHPDDYTPDIRIGTITAWLRCKNKKSERYRSNVSESGRTALKIHEVRKASTAMNEIAGITGLGEEALSLQRQTESLAILCNHTFGSNIMRPHLEKAIKGVEGRVGEMGRMAMKWLVVIICFSITSQPASACNLKTCLKLFNNTDAVTVHCFNENQGYMLTLASLGLGIITMLYLLVKIIIELVNGFVLGRWERWCGDIKTTIMPEIDSMEKDIALSRERLDLGEDAPDETDNSPIPFSNDGIFEI.

At 1–238 the chain is on the cytoplasmic side; it reads MAHEILIAET…VEGRVGEMGR (238 aa). A helical; Signal-anchor for type II membrane protein transmembrane segment spans residues 239–259; it reads MAMKWLVVIICFSITSQPASA. The Extracellular portion of the chain corresponds to 260-288; that stretch reads CNLKTCLKLFNNTDAVTVHCFNENQGYML. The N-linked (GlcNAc...) asparagine; by host glycan is linked to Asn270. Residues 289–309 form a helical membrane-spanning segment; the sequence is TLASLGLGIITMLYLLVKIII. Over 310–374 the chain is Cytoplasmic; the sequence is ELVNGFVLGR…PFSNDGIFEI (65 aa). Cys324 carries S-palmitoyl cysteine; by host lipidation. Ser337 and Ser362 each carry phosphoserine; by host.

It belongs to the influenza C protein M1 family. In terms of assembly, homodimer; disulfide-linked. Homotetramer; disulfide-linked. In terms of processing, palmitoylated. Post-translationally, N-glycosylated. Ser-337 is the major site of phosphorylation, Ser-362 being a minor one.

Its subcellular location is the host endoplasmic reticulum membrane. It localises to the virion membrane. It is found in the host cell membrane. Functionally, ion channel, which might have a role in genome packaging and uncoating processes. The chain is Polyprotein p42 (M) from Influenza C virus (strain C/Ann Arbor/1/1950).